A 154-amino-acid polypeptide reads, in one-letter code: Protein X (154 aa).

Positions 68-117 (PCALRFTSARRMETTVNAHRNLPKVLHKRTLGLSAMSTTDLEAYFKDCVF) are mitochondrial targeting sequence.

Belongs to the orthohepadnavirus protein X family. As to quaternary structure, may form homodimer. May interact with host CEBPA, CFLAR, CREB1, DDB1, E4F1, HBXIP, HSPD1/HSP60, NFKBIA, POLR2E and SMAD4. Interacts with host SMC5-SMC6 complex and induces its degradation. Interacts with host TRPC4AP; leading to prevent ubiquitination of TRPC4AP. Interacts with host PLSCR1; this interaction promotes ubiquitination and degradation of HBx and impairs HBx-mediated cell proliferation. Post-translationally, a fraction may be phosphorylated in insect cells and HepG2 cells, a human hepatoblastoma cell line. Phosphorylated in vitro by host protein kinase C or mitogen-activated protein kinase. N-acetylated in insect cells.

The protein resides in the host cytoplasm. Its subcellular location is the host nucleus. The protein localises to the host mitochondrion. Its function is as follows. Multifunctional protein that plays a role in silencing host antiviral defenses and promoting viral transcription. Does not seem to be essential for HBV infection. May be directly involved in development of cirrhosis and liver cancer (hepatocellular carcinoma). Most of cytosolic activities involve modulation of cytosolic calcium. The effect on apoptosis is controversial depending on the cell types in which the studies have been conducted. May induce apoptosis by localizing in mitochondria and causing loss of mitochondrial membrane potential. May also modulate apoptosis by binding host CFLAR, a key regulator of the death-inducing signaling complex (DISC). Promotes viral transcription by using the host E3 ubiquitin ligase DDB1 to target the SMC5-SMC6 complex to proteasomal degradation. This host complex would otherwise bind to viral episomal DNA, and prevents its transcription. Moderately stimulates transcription of many different viral and cellular transcription elements. Promoters and enhancers stimulated by HBx contain DNA binding sites for NF-kappa-B, AP-1, AP-2, c-EBP, ATF/CREB, or the calcium-activated factor NF-AT. The chain is Protein X from Hepatitis B virus genotype B1 subtype adw (isolate Japan/pJDW233/1988) (HBV-B).